The following is a 368-amino-acid chain: Anaphase-promoting complex subunit MND2 (368 aa).

Disordered stretches follow at residues 140-167 (AQNA…NGSI) and 286-336 (RNPY…GITP). Basic and acidic residues predominate over residues 149-162 (EDFRQHDSREEDPR). Position 293 is a phosphoserine (serine 293).

This sequence belongs to the APC15 family. As to quaternary structure, the APC/C is composed of at least 13 subunits that stay tightly associated throughout the cell cycle: APC1, APC2, APC4, APC5, APC9, APC11, CDC16, CDC23, CDC26, CDC27, DOC1, MND2 and SWM1. MND2 interacts directly with APC1, APC5 and CDC23.

It functions in the pathway protein modification; protein ubiquitination. In terms of biological role, component of the anaphase promoting complex/cyclosome (APC/C), a cell cycle-regulated E3 ubiquitin-protein ligase complex that controls progression through mitosis and the G1 phase of the cell cycle. The APC/C is thought to confer substrate specificity and, in the presence of ubiquitin-conjugating E2 enzymes, it catalyzes the formation of protein-ubiquitin conjugates that are subsequently degraded by the 26S proteasome. In early mitosis, the APC/C is activated by CDC20 and targets securin PDS1, the B-type cyclin CLB5, and other anaphase inhibitory proteins for proteolysis, thereby triggering the separation of sister chromatids at the metaphase-to-anaphase transition. In late mitosis and in G1, degradation of CLB5 allows activation of the APC/C by CDH1, which is needed to destroy CDC20 and the B-type cyclin CLB2 to allow exit from mitosis and creating the low CDK state necessary for cytokinesis and for reforming prereplicative complexes in G1 prior to another round of replication. The sequence is that of Anaphase-promoting complex subunit MND2 (MND2) from Saccharomyces cerevisiae (strain ATCC 204508 / S288c) (Baker's yeast).